Reading from the N-terminus, the 853-residue chain is DNA mismatch repair protein MutS (853 aa).

613-620 (GPNMGGKS) lines the ATP pocket.

Belongs to the DNA mismatch repair MutS family.

Its function is as follows. This protein is involved in the repair of mismatches in DNA. It is possible that it carries out the mismatch recognition step. This protein has a weak ATPase activity. This is DNA mismatch repair protein MutS from Vibrio parahaemolyticus serotype O3:K6 (strain RIMD 2210633).